The sequence spans 483 residues: ATP-dependent RNA helicase DDX25 (483 aa).

A Nuclear export signal motif is present at residues 61–74 (LAANSLLNKLIHQS). Residues 97–125 (KTFEELRLKEELLKGIYAMGFNRPSKIQE) carry the Q motif motif. The Nuclear localization signal signature appears at 100–114 (EELRLKEELLKGIYA). A Helicase ATP-binding domain is found at 130–300 (MMLAHPPQNL…ERIIPDPNVI (171 aa)). Residue 143-150 (SQSGTGKT) coordinates ATP. The DEAD box signature appears at 247–250 (DEAD). Positions 311 to 478 (NIRQYYVLCE…QLNAEDMDEI (168 aa)) constitute a Helicase C-terminal domain.

The protein belongs to the DEAD box helicase family. In terms of processing, phosphorylated on threonine residues. The phosphorylated form is found in the cytoplasm but not in the nucleus. As to expression, highly expressed in the Leydig and germ cells of the testis and weakly expressed in the pituitary and hypothalamus.

It is found in the cytoplasm. The protein localises to the nucleus. The catalysed reaction is ATP + H2O = ADP + phosphate + H(+). ATP-dependent RNA helicase. Required for mRNA export and translation regulation during spermatid development. The chain is ATP-dependent RNA helicase DDX25 (DDX25) from Homo sapiens (Human).